Consider the following 665-residue polypeptide: LisH domain-containing protein ARMC9 (665 aa).

The LisH domain occupies 7–39; that stretch reads HESELLGLVKEYLDFAEFEDTLKTFSKECKIKG. Residues 201 to 235 adopt a coiled-coil conformation; sequence ENGQSNKEMLQQLHQQLVEAERRSMTYLKRYNKIQ. Ser-582 carries the phosphoserine modification. The disordered stretch occupies residues 642-665; the sequence is VQWSGDEPLQRPVTPGGHRNGYPV.

As to quaternary structure, interacts with TOGARAM1, CCDC66, CEP104, CSPP1 and CEP290. Interacts with NDUFAF2.

Its subcellular location is the cytoplasm. The protein resides in the cytoskeleton. It is found in the cilium basal body. The protein localises to the cell projection. It localises to the cilium. Its subcellular location is the microtubule organizing center. The protein resides in the centrosome. It is found in the centriole. Involved in ciliogenesis. It is required for appropriate acetylation and polyglutamylation of ciliary microtubules, and regulation of cilium length. Acts as a positive regulator of hedgehog (Hh)signaling. May participate in the trafficking and/or retention of GLI2 and GLI3 proteins at the ciliary tip. This Pongo abelii (Sumatran orangutan) protein is LisH domain-containing protein ARMC9 (ARMC9).